Here is a 448-residue protein sequence, read N- to C-terminus: Glucose-6-phosphate isomerase (448 aa).

Glu-290 acts as the Proton donor in catalysis. Active-site residues include His-311 and Lys-425.

It belongs to the GPI family.

The protein resides in the cytoplasm. The enzyme catalyses alpha-D-glucose 6-phosphate = beta-D-fructose 6-phosphate. The protein operates within carbohydrate biosynthesis; gluconeogenesis. It participates in carbohydrate degradation; glycolysis; D-glyceraldehyde 3-phosphate and glycerone phosphate from D-glucose: step 2/4. Its function is as follows. Catalyzes the reversible isomerization of glucose-6-phosphate to fructose-6-phosphate. The sequence is that of Glucose-6-phosphate isomerase from Latilactobacillus sakei subsp. sakei (strain 23K) (Lactobacillus sakei subsp. sakei).